A 133-amino-acid polypeptide reads, in one-letter code: ATP synthase epsilon chain (133 aa).

The protein belongs to the ATPase epsilon chain family. In terms of assembly, F-type ATPases have 2 components, CF(1) - the catalytic core - and CF(0) - the membrane proton channel. CF(1) has five subunits: alpha(3), beta(3), gamma(1), delta(1), epsilon(1). CF(0) has three main subunits: a, b and c.

The protein resides in the cell membrane. Functionally, produces ATP from ADP in the presence of a proton gradient across the membrane. This chain is ATP synthase epsilon chain, found in Bacillus cytotoxicus (strain DSM 22905 / CIP 110041 / 391-98 / NVH 391-98).